The following is a 917-amino-acid chain: GTPase-activating Rap/Ran-GAP domain-like protein 3 (917 aa).

Residues 185 to 401 form the Rap-GAP domain; it reads LLVLEEQEGS…RTLDMLIRSL (217 aa). In terms of domain architecture, CNH spans 483–792; sequence PHEVVCADSW…QLVASRSDIY (310 aa).

It belongs to the GARNL3 family.

This Gallus gallus (Chicken) protein is GTPase-activating Rap/Ran-GAP domain-like protein 3 (GARNL3).